A 361-amino-acid chain; its full sequence is MGQTRIPCLLMRGGTSKGAYFLHDDLPAPGPLRDRVLLAVMGSPDARQIDGIGGADSLTSKVAIIRASQRDDADVDYLFAQVVVDEARVDYGQNCGNILAGVGPFALERGLVAASGASTPVRIFMENTGQIAVAQVPTADGQVEYAGDTRIDGVPGRAAALVVTFADVAGASCGALLPTGNSRDCVEGVEVTCIDNGMPVVLLCAEDLGVTGYEPCETLEADSALKTRLEAIRLQLGPRMNLGDVSQRNVPKMCLLSAPRNGGTVNTRSFIPHRCHASIGVFGAVSVATACLIEGSVAQGLASTSGGDRQRLAVEHPSGEFTVEISLEHGVIKGCGLVRTARLLFDGVVCIGRDTWGGPEK.

Belongs to the PrpF family.

It carries out the reaction (1E)-4-oxobut-1-ene-1,2,4-tricarboxylate = 4-carboxy-2-hydroxy-cis,cis-muconate. Its function is as follows. Catalyzes the tautomerization of the 4-oxalomesaconic acid keto (OMAketo) generated by GalA dioxygenase to 4-oxalomesaconic acid enol (OMAenol). Mediates the second step in gallate degradation pathway. The polypeptide is 4-oxalomesaconate tautomerase (galD) (Pseudomonas putida (strain ATCC 47054 / DSM 6125 / CFBP 8728 / NCIMB 11950 / KT2440)).